The following is a 385-amino-acid chain: Ethanolamine kinase 2 (385 aa).

The protein belongs to the choline/ethanolamine kinase family. As to expression, expressed in testis and liver. Low expression in ovary and kidney.

The catalysed reaction is ethanolamine + ATP = phosphoethanolamine + ADP + H(+). Its pathway is phospholipid metabolism; phosphatidylethanolamine biosynthesis; phosphatidylethanolamine from ethanolamine: step 1/3. In terms of biological role, highly specific for ethanolamine phosphorylation. Does not have choline kinase activity. The polypeptide is Ethanolamine kinase 2 (Etnk2) (Mus musculus (Mouse)).